A 307-amino-acid polypeptide reads, in one-letter code: Ribonuclease Z (307 aa).

His-63, His-65, Asp-67, His-68, His-141, Asp-212, and His-270 together coordinate Zn(2+). Asp-67 (proton acceptor) is an active-site residue.

This sequence belongs to the RNase Z family. In terms of assembly, homodimer. Requires Zn(2+) as cofactor.

It catalyses the reaction Endonucleolytic cleavage of RNA, removing extra 3' nucleotides from tRNA precursor, generating 3' termini of tRNAs. A 3'-hydroxy group is left at the tRNA terminus and a 5'-phosphoryl group is left at the trailer molecule.. Its function is as follows. Zinc phosphodiesterase, which displays some tRNA 3'-processing endonuclease activity. Probably involved in tRNA maturation, by removing a 3'-trailer from precursor tRNA. In Bacillus thuringiensis subsp. konkukian (strain 97-27), this protein is Ribonuclease Z.